The chain runs to 440 residues: NADH-quinone oxidoreductase subunit D 2 (440 aa).

The protein belongs to the complex I 49 kDa subunit family. As to quaternary structure, NDH-1 is composed of 14 different subunits. Subunits NuoB, C, D, E, F, and G constitute the peripheral sector of the complex.

The protein resides in the cell membrane. The enzyme catalyses a quinone + NADH + 5 H(+)(in) = a quinol + NAD(+) + 4 H(+)(out). Its function is as follows. NDH-1 shuttles electrons from NADH, via FMN and iron-sulfur (Fe-S) centers, to quinones in the respiratory chain. The immediate electron acceptor for the enzyme in this species is believed to be a menaquinone. Couples the redox reaction to proton translocation (for every two electrons transferred, four hydrogen ions are translocated across the cytoplasmic membrane), and thus conserves the redox energy in a proton gradient. The polypeptide is NADH-quinone oxidoreductase subunit D 2 (Streptomyces coelicolor (strain ATCC BAA-471 / A3(2) / M145)).